A 459-amino-acid polypeptide reads, in one-letter code: Fe(3+)-Zn(2+) purple acid phosphatase (459 aa).

An N-terminal signal peptide occupies residues 1–22 (MGVVKGLLALALVLNVVVVSNG). The residue at position 23 (G23) is a Blocked amino end (Gly). Residue N108 is glycosylated (N-linked (GlcNAc...) asparagine; partial). N136 carries N-linked (GlcNAc...) asparagine glycosylation. D162 provides a ligand contact to Fe cation. Residue N170 is glycosylated (N-linked (GlcNAc...) asparagine). Positions 191 and 194 each coordinate Fe cation. Residue D191 coordinates Zn(2+). N228 serves as a coordination point for Zn(2+). The N-linked (GlcNAc...) asparagine glycan is linked to N238. A Zn(2+)-binding site is contributed by H313. H323 functions as the Proton donor in the catalytic mechanism. H350 is a Zn(2+) binding site. H352 is a binding site for Fe cation. N423 carries N-linked (GlcNAc...) asparagine glycosylation.

This sequence belongs to the metallophosphoesterase superfamily. Purple acid phosphatase family. In terms of assembly, homodimer; disulfide-linked. It depends on Fe cation as a cofactor. Zn(2+) serves as cofactor.

The protein resides in the secreted. The enzyme catalyses a phosphate monoester + H2O = an alcohol + phosphate. Inhibited by compounds CC24201, CC27209, and MO07123. Inhibited by the tetraoxoanions molybdate and phosphate. Not inhibited by EDTA or tartrate. In Phaseolus vulgaris (Kidney bean), this protein is Fe(3+)-Zn(2+) purple acid phosphatase.